The primary structure comprises 306 residues: Palmitoyl-protein thioesterase ABHD10, mitochondrial (306 aa).

The N-terminal 52 residues, Met-1–Lys-52, are a transit peptide targeting the mitochondrion. In terms of domain architecture, AB hydrolase-1 spans Ile-78–Thr-177. Active-site charge relay system residues include Ser-152, Asp-249, and His-279.

This sequence belongs to the AB hydrolase superfamily.

Its subcellular location is the mitochondrion. It carries out the reaction S-hexadecanoyl-L-cysteinyl-[protein] + H2O = L-cysteinyl-[protein] + hexadecanoate + H(+). The catalysed reaction is mycophenolic acid O-acyl-beta-D-glucuronide + H2O = mycophenolate + D-glucuronate + H(+). With respect to regulation, inhibited by palmostatin-B. Acts as an acyl-protein thioesterase that hydrolyzes fatty acids from acylated residues in proteins. Regulates the mitochondrial S-depalmitoylation of the nucleophilic active site residue of peroxiredoxin-5/PRDX5, a key antioxidant protein, therefore modulating mitochondrial antioxidant ability. Also catalyzes the deglucuronidation of mycophenolic acid acyl-glucuronide, an active metabolite of the immunosuppressant drug mycophenolate. This chain is Palmitoyl-protein thioesterase ABHD10, mitochondrial (ABHD10), found in Pongo abelii (Sumatran orangutan).